Consider the following 225-residue polypeptide: Enolase-phosphatase E1 (225 aa).

It belongs to the HAD-like hydrolase superfamily. MasA/MtnC family. Monomer. Requires Mg(2+) as cofactor.

The enzyme catalyses 5-methylsulfanyl-2,3-dioxopentyl phosphate + H2O = 1,2-dihydroxy-5-(methylsulfanyl)pent-1-en-3-one + phosphate. It participates in amino-acid biosynthesis; L-methionine biosynthesis via salvage pathway; L-methionine from S-methyl-5-thio-alpha-D-ribose 1-phosphate: step 3/6. Its pathway is amino-acid biosynthesis; L-methionine biosynthesis via salvage pathway; L-methionine from S-methyl-5-thio-alpha-D-ribose 1-phosphate: step 4/6. Bifunctional enzyme that catalyzes the enolization of 2,3-diketo-5-methylthiopentyl-1-phosphate (DK-MTP-1-P) into the intermediate 2-hydroxy-3-keto-5-methylthiopentenyl-1-phosphate (HK-MTPenyl-1-P), which is then dephosphorylated to form the acireductone 1,2-dihydroxy-3-keto-5-methylthiopentene (DHK-MTPene). This is Enolase-phosphatase E1 from Shewanella denitrificans (strain OS217 / ATCC BAA-1090 / DSM 15013).